The primary structure comprises 931 residues: Phosphoenolpyruvate carboxylase (931 aa).

Residues His158 and Lys593 contribute to the active site.

This sequence belongs to the PEPCase type 1 family. Requires Mg(2+) as cofactor.

It catalyses the reaction oxaloacetate + phosphate = phosphoenolpyruvate + hydrogencarbonate. Forms oxaloacetate, a four-carbon dicarboxylic acid source for the tricarboxylic acid cycle. This Azorhizobium caulinodans (strain ATCC 43989 / DSM 5975 / JCM 20966 / LMG 6465 / NBRC 14845 / NCIMB 13405 / ORS 571) protein is Phosphoenolpyruvate carboxylase.